We begin with the raw amino-acid sequence, 713 residues long: Cyclomaltodextrin glucanotransferase (713 aa).

An N-terminal signal peptide occupies residues 1-27 (MKKFLKSTAALALGLSLTFGLFSPAQA). Residues 28 to 165 (APDTSVSNKQ…NIKVIIDFAP (138 aa)) form an A1 region. Ca(2+) is bound by residues Asp54, Asn56, Asn59, and Asn60. The cysteines at positions 70 and 77 are disulfide-linked. 2 residues coordinate Ca(2+): Gly78 and Asp80. 127 to 128 (YW) is a binding site for substrate. Asn166 serves as a coordination point for Ca(2+). A b region spans residues 166–229 (NHTSPASSDQ…NLYDLADLNH (64 aa)). Substrate contacts are provided by residues His167 and 172 to 174 (SSD). Ile217 serves as a coordination point for Ca(2+). A substrate-binding site is contributed by 220 to 223 (NLYD). Residue Asp226 participates in Ca(2+) binding. The interval 230 to 433 (NNSTVDVYLK…LRKCNPAIAY (204 aa)) is A2. Residue Arg254 coordinates substrate. Residue Asp256 is the Nucleophile of the active site. A substrate-binding site is contributed by 259-260 (KH). His260 provides a ligand contact to Ca(2+). Residue Glu284 is the Proton donor of the active site. A Ca(2+)-binding site is contributed by Ala342. Positions 354, 398, and 402 each coordinate substrate. The tract at residues 434-522 (GSTQERWINN…GTAVWQYTAA (89 aa)) is c. The tract at residues 523 to 609 (TATPTIGHVG…SNVYDNFEVL (87 aa)) is d. The IPT/TIG domain maps to 526 to 607 (PTIGHVGPMM…TASNVYDNFE (82 aa)). Residue Asp604 participates in Ca(2+) binding. Positions 608-713 (VLSGDQVSVR…TATINVNWQP (106 aa)) constitute a CBM20 domain. The segment at 610 to 713 (SGDQVSVRFV…TATINVNWQP (104 aa)) is e.

The protein belongs to the glycosyl hydrolase 13 family. As to quaternary structure, monomer. The cofactor is Ca(2+).

It localises to the secreted. The catalysed reaction is Cyclizes part of a (1-&gt;4)-alpha-D-glucan chain by formation of a (1-&gt;4)-alpha-D-glucosidic bond.. The sequence is that of Cyclomaltodextrin glucanotransferase (cgt) from Niallia circulans (Bacillus circulans).